The primary structure comprises 716 residues: 1,4-alpha-glucan branching enzyme GlgB (716 aa).

Asp398 (nucleophile) is an active-site residue. Catalysis depends on Glu451, which acts as the Proton donor.

This sequence belongs to the glycosyl hydrolase 13 family. GlgB subfamily. Monomer.

The catalysed reaction is Transfers a segment of a (1-&gt;4)-alpha-D-glucan chain to a primary hydroxy group in a similar glucan chain.. The protein operates within glycan biosynthesis; glycogen biosynthesis. Catalyzes the formation of the alpha-1,6-glucosidic linkages in glycogen by scission of a 1,4-alpha-linked oligosaccharide from growing alpha-1,4-glucan chains and the subsequent attachment of the oligosaccharide to the alpha-1,6 position. This is 1,4-alpha-glucan branching enzyme GlgB from Nitrobacter hamburgensis (strain DSM 10229 / NCIMB 13809 / X14).